The chain runs to 90 residues: Large ribosomal subunit protein uL23c (90 aa).

It belongs to the universal ribosomal protein uL23 family. Part of the 50S ribosomal subunit.

The protein localises to the plastid. It is found in the chloroplast. Its function is as follows. Binds to 23S rRNA. The chain is Large ribosomal subunit protein uL23c (rpl23) from Oltmannsiellopsis viridis (Marine flagellate).